The sequence spans 84 residues: Large ribosomal subunit protein uL23 (84 aa).

Belongs to the universal ribosomal protein uL23 family. Part of the 50S ribosomal subunit. Contacts protein L29.

Its function is as follows. Binds to 23S rRNA. One of the proteins that surrounds the polypeptide exit tunnel on the outside of the ribosome. The sequence is that of Large ribosomal subunit protein uL23 from Thermoplasma acidophilum (strain ATCC 25905 / DSM 1728 / JCM 9062 / NBRC 15155 / AMRC-C165).